The sequence spans 202 residues: Sterile alpha motif domain-containing protein 10 (202 aa).

An SAM domain is found at 118–184 (WSQQDVCKWL…LQQVLRLQVR (67 aa)).

In Homo sapiens (Human), this protein is Sterile alpha motif domain-containing protein 10 (SAMD10).